A 330-amino-acid polypeptide reads, in one-letter code: Biotin synthase (330 aa).

Residues 53–276 form the Radical SAM core domain; sequence NNIRLNVLLS…VFPFKELRLS (224 aa). Residues Cys-68, Cys-72, and Cys-75 each contribute to the [4Fe-4S] cluster site. [2Fe-2S] cluster-binding residues include Cys-112, Cys-144, Cys-204, and Arg-274.

This sequence belongs to the radical SAM superfamily. Biotin synthase family. As to quaternary structure, homodimer. [4Fe-4S] cluster is required as a cofactor. The cofactor is [2Fe-2S] cluster.

The catalysed reaction is (4R,5S)-dethiobiotin + (sulfur carrier)-SH + 2 reduced [2Fe-2S]-[ferredoxin] + 2 S-adenosyl-L-methionine = (sulfur carrier)-H + biotin + 2 5'-deoxyadenosine + 2 L-methionine + 2 oxidized [2Fe-2S]-[ferredoxin]. It participates in cofactor biosynthesis; biotin biosynthesis; biotin from 7,8-diaminononanoate: step 2/2. Catalyzes the conversion of dethiobiotin (DTB) to biotin by the insertion of a sulfur atom into dethiobiotin via a radical-based mechanism. The chain is Biotin synthase from Streptococcus agalactiae serotype III (strain NEM316).